Reading from the N-terminus, the 91-residue chain is Small ribosomal subunit protein bS20 (91 aa).

The interval Lys72–Ala91 is disordered.

The protein belongs to the bacterial ribosomal protein bS20 family.

Functionally, binds directly to 16S ribosomal RNA. The sequence is that of Small ribosomal subunit protein bS20 from Halalkalibacterium halodurans (strain ATCC BAA-125 / DSM 18197 / FERM 7344 / JCM 9153 / C-125) (Bacillus halodurans).